Reading from the N-terminus, the 369-residue chain is Homoserine O-succinyltransferase (369 aa).

The tract at residues 1–21 (MVRIVPSARRTRAPAKLDGRS) is disordered. Positions 86–350 (VVFVAGGISA…PFGHDAFLKE (265 aa)) constitute an AB hydrolase-1 domain. The interval 92-95 (GISA) is important for substrate specificity. Catalysis depends on S172, which acts as the Nucleophile. R233 lines the substrate pocket. Residues D314 and H344 contribute to the active site. D345 serves as a coordination point for substrate.

Belongs to the AB hydrolase superfamily. MetX family. Homodimer.

The protein resides in the cytoplasm. The enzyme catalyses L-homoserine + succinyl-CoA = O-succinyl-L-homoserine + CoA. The protein operates within amino-acid biosynthesis; L-methionine biosynthesis via de novo pathway; O-succinyl-L-homoserine from L-homoserine: step 1/1. In terms of biological role, transfers a succinyl group from succinyl-CoA to L-homoserine, forming succinyl-L-homoserine. The sequence is that of Homoserine O-succinyltransferase from Xanthomonas campestris pv. campestris (strain ATCC 33913 / DSM 3586 / NCPPB 528 / LMG 568 / P 25).